A 157-amino-acid chain; its full sequence is Cyclic pyranopterin monophosphate synthase (157 aa).

Substrate-binding positions include 74–76 (MCH) and 112–113 (ME). Aspartate 127 is a catalytic residue.

The protein belongs to the MoaC family. As to quaternary structure, homohexamer; trimer of dimers.

The catalysed reaction is (8S)-3',8-cyclo-7,8-dihydroguanosine 5'-triphosphate = cyclic pyranopterin phosphate + diphosphate. Its pathway is cofactor biosynthesis; molybdopterin biosynthesis. Functionally, catalyzes the conversion of (8S)-3',8-cyclo-7,8-dihydroguanosine 5'-triphosphate to cyclic pyranopterin monophosphate (cPMP). This chain is Cyclic pyranopterin monophosphate synthase, found in Campylobacter jejuni subsp. doylei (strain ATCC BAA-1458 / RM4099 / 269.97).